The primary structure comprises 402 residues: Alanine racemase (402 aa).

K34 serves as the catalytic Proton acceptor; specific for D-alanine. K34 bears the N6-(pyridoxal phosphate)lysine mark. Substrate is bound at residue R133. Residues 226–271 (EVSYNLSYKEKFERNTPALATTVCINKCADVNTRLTYKVPLKGSYR) enclose the RPE1 insert domain. Y296 functions as the Proton acceptor; specific for L-alanine in the catalytic mechanism. M344 is a binding site for substrate.

The protein belongs to the alanine racemase family. The cofactor is pyridoxal 5'-phosphate.

It carries out the reaction L-alanine = D-alanine. The protein operates within amino-acid biosynthesis; D-alanine biosynthesis; D-alanine from L-alanine: step 1/1. Its function is as follows. Catalyzes the interconversion of L-alanine and D-alanine. May also act on other amino acids. The protein is Alanine racemase (alr) of Rickettsia typhi (strain ATCC VR-144 / Wilmington).